Consider the following 657-residue polypeptide: Replication restart protein PriA (657 aa).

Residues 143–309 (ITASTGARSF…LRGAVRRLPL (167 aa)) form the Helicase ATP-binding domain. An ATP-binding site is contributed by 156 to 163 (GVTGSGKT). Positions 252-255 (DEEH) match the DEAH box motif. 8 residues coordinate Zn(2+): Cys366, Cys369, Cys375, Cys378, Cys393, Cys396, Cys406, and Cys409. One can recognise a Helicase C-terminal domain in the interval 390-570 (AMQCHYCGRQ…PFVRLIRFVF (181 aa)).

Belongs to the helicase family. PriA subfamily. As to quaternary structure, component of the replication restart primosome. The cofactor is Zn(2+).

It carries out the reaction Couples ATP hydrolysis with the unwinding of duplex DNA by translocating in the 3'-5' direction.. The enzyme catalyses ATP + H2O = ADP + phosphate + H(+). Its function is as follows. Initiates the restart of stalled replication forks, which reloads the replicative helicase on sites other than the origin of replication. Recognizes and binds to abandoned replication forks and remodels them to uncover a helicase loading site. Promotes assembly of the primosome at these replication forks. In Treponema pallidum (strain Nichols), this protein is Replication restart protein PriA.